The chain runs to 487 residues: Lysophospholipid acyltransferase 5 (487 aa).

N-acetylalanine is present on Ala2. A run of 6 helical transmembrane segments spans residues Leu44–Tyr64, Phe84–Leu104, Ile111–Tyr131, Gly180–Gly200, Ile227–Leu247, and Val285–Phe305. Active-site residues include Asn338 and His374. Transmembrane regions (helical) follow at residues Gly364–Phe384, Leu422–Phe442, and Ser453–His473. Residues Lys484–Glu487 carry the Di-lysine motif motif.

It belongs to the membrane-bound acyltransferase family. Highly expressed in liver, pancreas and adipose tissue. Very low expression in skeletal muscle and heart. Detected in neutrophils.

The protein localises to the endoplasmic reticulum membrane. It catalyses the reaction a 1-acyl-sn-glycero-3-phosphocholine + an acyl-CoA = a 1,2-diacyl-sn-glycero-3-phosphocholine + CoA. The enzyme catalyses a 1-acyl-sn-glycero-3-phosphoethanolamine + an acyl-CoA = a 1,2-diacyl-sn-glycero-3-phosphoethanolamine + CoA. It carries out the reaction a 1-acyl-sn-glycero-3-phospho-L-serine + an acyl-CoA = a 1,2-diacyl-sn-glycero-3-phospho-L-serine + CoA. The catalysed reaction is (9Z,12Z)-octadecadienoyl-CoA + a 1-acyl-sn-glycero-3-phosphocholine = 1-acyl-2-(9Z,12Z)-octadecadienoyl-sn-glycero-3-phosphocholine + CoA. It catalyses the reaction (5Z,8Z,11Z,14Z)-eicosatetraenoyl-CoA + a 1-acyl-sn-glycero-3-phosphocholine = 1-acyl-2-(5Z,8Z,11Z,14Z-eicosatetraenoyl)-sn-glycero-3-phosphocholine + CoA. The enzyme catalyses dodecanoyl-CoA + 1-hexadecanoyl-sn-glycero-3-phosphocholine = 1-hexadecanoyl-2-dodecanoyl-sn-glycero-3-phosphocholine + CoA. It carries out the reaction octadecanoyl-CoA + 1-hexadecanoyl-sn-glycero-3-phosphocholine = 1-hexadecanoyl-2-octadecanoyl-sn-glycero-3-phosphocholine + CoA. The catalysed reaction is 1-dodecanoyl-sn-glycero-3-phosphocholine + hexadecanoyl-CoA = 1-dodecanoyl-2-hexadecanoyl-sn-glycero-3-phosphocholine + CoA. It catalyses the reaction 1-tetradecanoyl-sn-glycero-3-phosphocholine + hexadecanoyl-CoA = 1-tetradecanoyl-2-hexadecanoyl-sn-glycero-3-phosphocholine + CoA. The enzyme catalyses 1-hexadecanoyl-sn-glycero-3-phosphocholine + hexadecanoyl-CoA = 1,2-dihexadecanoyl-sn-glycero-3-phosphocholine + CoA. It carries out the reaction 1-octadecanoyl-sn-glycero-3-phosphocholine + hexadecanoyl-CoA = 1-octadecanoyl-2-hexadecanoyl-sn-glycero-3-phosphocholine + CoA. The catalysed reaction is 1-(9Z-octadecenoyl)-sn-glycero-3-phosphocholine + hexadecanoyl-CoA = 1-(9Z-octadecenoyl)-2-hexadecanoyl-sn-glycero-3-phosphocholine + CoA. It catalyses the reaction (9Z)-hexadecenoyl-CoA + 1-hexadecanoyl-sn-glycero-3-phosphocholine = 1-hexadecanoyl-2-(9Z-hexadecenoyl)-sn-glycero-3-phosphocholine + CoA. The enzyme catalyses 1-hexadecanoyl-sn-glycero-3-phosphocholine + (9Z)-octadecenoyl-CoA = 1-hexadecanoyl-2-(9Z-octadecenoyl)-sn-glycero-3-phosphocholine + CoA. It carries out the reaction (9Z,12Z)-octadecadienoyl-CoA + 1-hexadecanoyl-sn-glycero-3-phosphocholine = 1-hexadecanoyl-2-(9Z,12Z-octadecadienoyl)-sn-glycero-3-phosphocholine + CoA. The catalysed reaction is 1-dodecanoyl-sn-glycero-3-phosphocholine + (5Z,8Z,11Z,14Z)-eicosatetraenoyl-CoA = 1-dodecanoyl-2-(5Z,8Z,11Z,14Z)-eicosatetraenoyl-sn-glycero-3-phosphocholine + CoA. It catalyses the reaction (5Z,8Z,11Z,14Z)-eicosatetraenoyl-CoA + 1-hexadecanoyl-sn-glycero-3-phosphocholine = 1-hexadecanoyl-2-(5Z,8Z,11Z,14Z-eicosatetraenoyl)-sn-glycero-3-phosphocholine + CoA. The enzyme catalyses 1-octadecanoyl-sn-glycero-3-phosphocholine + (5Z,8Z,11Z,14Z)-eicosatetraenoyl-CoA = 1-octadecanoyl-2-(5Z,8Z,11Z,14Z-eicosatetraenoyl)-sn-glycero-3-phosphocholine + CoA. It carries out the reaction 1-eicosanoyl-sn-glycero-3-phosphocholine + (5Z,8Z,11Z,14Z)-eicosatetraenoyl-CoA = 1-eicosanoyl-2-(5Z,8Z,11Z,14Z)-eicosatetraenoyl-sn-glycero-3-phosphocholine + CoA. The catalysed reaction is 1-(9Z-octadecenoyl)-sn-glycero-3-phosphocholine + (9Z)-octadecenoyl-CoA = 1,2-di-(9Z-octadecenoyl)-sn-glycero-3-phosphocholine + CoA. It catalyses the reaction 1-(9Z-octadecenoyl)-sn-glycero-3-phosphocholine + (9Z,12Z)-octadecadienoyl-CoA = 1-(9Z)-octadecenoyl-2-(9Z,12Z)-octadecadienoyl-sn-glycero-3-phosphocholine + CoA. The enzyme catalyses 1-(9Z-octadecenoyl)-sn-glycero-3-phosphocholine + (5Z,8Z,11Z,14Z)-eicosatetraenoyl-CoA = 1-(9Z)-octadecenoyl-2-(5Z,8Z,11Z,14Z)-icosatetraenoyl-sn-glycero-3-phosphocholine + CoA. It carries out the reaction a 1-acyl-sn-glycero-3-phosphoethanolamine + (9Z,12Z)-octadecadienoyl-CoA = 1-acyl-2-(9Z,12Z)-octadecadienoyl-sn-glycero-3-phosphoethanolamine + CoA. The catalysed reaction is 1-(9Z-octadecenoyl)-sn-glycero-3-phosphoethanolamine + (9Z,12Z)-octadecadienoyl-CoA = 1-(9Z)-octadecenoyl-2-(9Z,12Z)-octadecadienoyl-sn-glycero-3-phosphoethanolamine + CoA. It catalyses the reaction 1-(10Z-heptadecenoyl)-sn-glycero-3-phosphoethanolamine + (9Z,12Z)-octadecadienoyl-CoA = 1-(10Z-heptadecenoyl)-2-(9Z,12Z-octadecadienoyl)-sn-glycero-3-phosphoethanolamine + CoA. The enzyme catalyses a 1-acyl-sn-glycero-3-phosphoethanolamine + (5Z,8Z,11Z,14Z)-eicosatetraenoyl-CoA = 1-acyl-2-(5Z,8Z,11Z,14Z)-eicosatetraenoyl-sn-glycero-3-phosphoethanolamine + CoA. It carries out the reaction 1-hexadecanoyl-sn-glycero-3-phosphoethanolamine + (5Z,8Z,11Z,14Z)-eicosatetraenoyl-CoA = 1-hexadecanoyl-2-(5Z,8Z,11Z,14Z-eicosatetraenoyl)-sn-glycero-3-phosphoethanolamine + CoA. The catalysed reaction is 1-(9Z-octadecenoyl)-sn-glycero-3-phosphoethanolamine + (5Z,8Z,11Z,14Z)-eicosatetraenoyl-CoA = 1-(9Z)-octadecenoyl-2-(5Z,8Z,11Z,14Z)-eicosatetraenoyl-sn-glycero-3-phosphoethanolamine + CoA. It catalyses the reaction 1-(10Z-heptadecenoyl)-sn-glycero-3-phosphoethanolamine + (5Z,8Z,11Z,14Z)-eicosatetraenoyl-CoA = 1-(10Z-heptadecenoyl)-2-(5Z,8Z,11Z,14Z-eicosatetraenoyl)-sn-glycero-3-phosphoethanolamine + CoA. The enzyme catalyses a 1-O-(1Z-alkenyl)-sn-glycero-3-phosphoethanolamine + (5Z,8Z,11Z,14Z)-eicosatetraenoyl-CoA = 1-O-(1Z)-alkenyl-2-(5Z,8Z,11Z,14Z)-eicosatetraenoyl-sn-glycero-3-phosphoethanolamine + CoA. It carries out the reaction a 1-acyl-sn-glycero-3-phospho-L-serine + (9Z,12Z)-octadecadienoyl-CoA = 1-acyl-2-(9Z,12Z-octadecadienoyl)-sn-glycero-3-phospho-L-serine + CoA. The catalysed reaction is a 1-acyl-sn-glycero-3-phospho-L-serine + (5Z,8Z,11Z,14Z)-eicosatetraenoyl-CoA = 1-acyl-2-(5Z,8Z,11Z,14Z-eicosatetraenoyl)-sn-glycero-3-phospho-L-serine + CoA. It catalyses the reaction 1-hexadecanoyl-sn-glycero-3-phospho-L-serine + (9Z)-octadecenoyl-CoA = 1-hexadecanoyl-2-(9Z-octadecenoyl)-sn-glycero-3-phospho-L-serine + CoA. The enzyme catalyses 1-(9Z-octadecenoyl)-sn-glycero-3-phospho-L-serine + (9Z)-octadecenoyl-CoA = 1,2-di-(9Z)-octadecenoyl-sn-glycero-3-phospho-L-serine + CoA. It carries out the reaction 1-hexadecanoyl-sn-glycero-3-phospho-L-serine + (9Z,12Z)-octadecadienoyl-CoA = 1-hexadecanoyl-2-(9Z,12Z-octadecadienoyl)-sn-glycero-3-phospho-L-serine + CoA. The catalysed reaction is 1-(9Z-octadecenoyl)-sn-glycero-3-phospho-L-serine + (9Z,12Z)-octadecadienoyl-CoA = 1-(9Z-octadecenoyl)-2-(9Z,12Z-octadienoyl)-sn-glycero-3-phospho-L-serine + CoA. It catalyses the reaction 1-hexadecanoyl-sn-glycero-3-phospho-L-serine + (5Z,8Z,11Z,14Z)-eicosatetraenoyl-CoA = 1-hexadecanoyl-2-(5Z,8Z,11Z,14Z-eicosatetraenoyl)-sn-glycero-3-phospho-L-serine + CoA. The enzyme catalyses 1-(9Z-octadecenoyl)-sn-glycero-3-phospho-L-serine + (5Z,8Z,11Z,14Z)-eicosatetraenoyl-CoA = 1-(9Z-octadecenoyl)-2-(5Z,8Z,11Z,14Z-eicosatetraenoyl)-sn-glycero-3-phospho-L-serine + CoA. The protein operates within lipid metabolism; phospholipid metabolism. Its activity is regulated as follows. Activity is inhibited by thimerosal. Functionally, lysophospholipid O-acyltransferase (LPLAT) that catalyzes the reacylation step of the phospholipid remodeling process also known as the Lands cycle. Catalyzes transfer of the fatty acyl chain from fatty acyl-CoA to 1-acyl lysophospholipid to form various classes of phospholipids. Converts 1-acyl lysophosphatidylcholine (LPC) into phosphatidylcholine (PC) (LPCAT activity), 1-acyl lysophosphatidylserine (LPS) into phosphatidylserine (PS) (LPSAT activity) and 1-acyl lysophosphatidylethanolamine (LPE) into phosphatidylethanolamine (PE) (LPEAT activity). Favors polyunsaturated fatty acyl-CoAs as acyl donors compared to saturated fatty acyl-CoAs. Has higher activity for LPC acyl acceptors compared to LPEs and LPSs. Can also transfer the fatty acyl chain from fatty acyl-CoA to 1-O-alkyl lysophospholipid or 1-O-alkenyl lysophospholipid with lower efficiency. Acts as a major LPC O-acyltransferase in liver and intestine. As a component of the liver X receptor/NR1H3 or NR1H2 signaling pathway, mainly catalyzes the incorporation of arachidonate into PCs of endoplasmic reticulum (ER) membranes, increasing membrane dynamics and enabling triacylglycerols transfer to nascent very low-density lipoprotein (VLDL) particles. Promotes processing of sterol regulatory protein SREBF1 in hepatocytes, likely by facilitating the translocation of SREBF1-SCAP complex from ER to the Golgi apparatus. Participates in mechanisms by which the liver X receptor/NR1H3 or NR1H2 signaling pathway counteracts lipid-induced ER stress response and inflammation. Down-regulates hepatic inflammation by limiting arachidonic acid availability for synthesis of inflammatory eicosanoids, such as prostaglandins. In enterocytes, acts as a component of a gut-brain feedback loop that coordinates dietary lipid absorption and food intake. Regulates the abundance of PCs containing linoleate and arachidonate in enterocyte membranes, enabling passive diffusion of fatty acids and cholesterol across the membrane for efficient chylomicron assembly. In the intestinal crypt, acts as a component of dietary-responsive phospholipid-cholesterol axis, regulating the biosynthesis of cholesterol and its mitogenic effects on intestinal stem cells. The chain is Lysophospholipid acyltransferase 5 (LPCAT3) from Homo sapiens (Human).